The primary structure comprises 259 residues: Methyltransferase afvD (259 aa).

Belongs to the class I-like SAM-binding methyltransferase superfamily.

It functions in the pathway secondary metabolite biosynthesis. In terms of biological role, methyltransferase; part of the gene cluster that mediates the biosynthesis of aflavarin, a bicoumarin that exhibits anti-insectan activity against the fungivorous beetle C.hemipterus. In Aspergillus flavus (strain ATCC 200026 / FGSC A1120 / IAM 13836 / NRRL 3357 / JCM 12722 / SRRC 167), this protein is Methyltransferase afvD.